The sequence spans 360 residues: Phenylalanine--tRNA ligase alpha subunit (360 aa).

Glu260 contributes to the Mg(2+) binding site.

The protein belongs to the class-II aminoacyl-tRNA synthetase family. Phe-tRNA synthetase alpha subunit type 1 subfamily. As to quaternary structure, tetramer of two alpha and two beta subunits. Mg(2+) is required as a cofactor.

It is found in the cytoplasm. The catalysed reaction is tRNA(Phe) + L-phenylalanine + ATP = L-phenylalanyl-tRNA(Phe) + AMP + diphosphate + H(+). The polypeptide is Phenylalanine--tRNA ligase alpha subunit (Bradyrhizobium diazoefficiens (strain JCM 10833 / BCRC 13528 / IAM 13628 / NBRC 14792 / USDA 110)).